The sequence spans 213 residues: MAEKSILEAVKKVLEESPKRNFSESVDLAINLKNLDMNLPKNRVDEEVILPHGLGKELKIGVFAKGDVGLRAKAAGAAYVISDVELDELASDKTRARTLANECDLFIAETQFMPTIGKNLGIVLGPRGKMPIPLLPNKDIGELIQSKQNAIRLRSKDKLTFHVPVGRRTMSPDDLAENVEIIVSRLERVLDKGRHNLRTVYVTTTMGKSERVV.

The protein belongs to the universal ribosomal protein uL1 family. Part of the 50S ribosomal subunit.

Functionally, binds directly to 23S rRNA. Probably involved in E site tRNA release. Protein L1 is also a translational repressor protein, it controls the translation of its operon by binding to its mRNA. This is Large ribosomal subunit protein uL1 from Methanosarcina barkeri (strain Fusaro / DSM 804).